Consider the following 154-residue polypeptide: Putative pre-16S rRNA nuclease (154 aa).

The protein belongs to the YqgF nuclease family.

The protein resides in the cytoplasm. Functionally, could be a nuclease involved in processing of the 5'-end of pre-16S rRNA. The protein is Putative pre-16S rRNA nuclease of Rickettsia felis (strain ATCC VR-1525 / URRWXCal2) (Rickettsia azadi).